We begin with the raw amino-acid sequence, 438 residues long: Trigger factor (438 aa).

The region spanning 170 to 255 (GDTVVIDFDG…IHELKKLETP (86 aa)) is the PPIase FKBP-type domain.

This sequence belongs to the FKBP-type PPIase family. Tig subfamily.

It localises to the cytoplasm. The catalysed reaction is [protein]-peptidylproline (omega=180) = [protein]-peptidylproline (omega=0). Involved in protein export. Acts as a chaperone by maintaining the newly synthesized protein in an open conformation. Functions as a peptidyl-prolyl cis-trans isomerase. This is Trigger factor (tig) from Oenococcus oeni (Leuconostoc oenos).